The primary structure comprises 396 residues: CCA-adding enzyme (396 aa).

G32 and R35 together coordinate ATP. The CTP site is built by G32 and R35. Mg(2+) contacts are provided by D45 and D47. R116, D159, R162, R165, and R168 together coordinate ATP. The CTP site is built by R116, D159, R162, R165, and R168.

It belongs to the tRNA nucleotidyltransferase/poly(A) polymerase family. Bacterial CCA-adding enzyme type 3 subfamily. As to quaternary structure, homodimer. The cofactor is Mg(2+).

The enzyme catalyses a tRNA precursor + 2 CTP + ATP = a tRNA with a 3' CCA end + 3 diphosphate. It carries out the reaction a tRNA with a 3' CCA end + 2 CTP + ATP = a tRNA with a 3' CCACCA end + 3 diphosphate. Functionally, catalyzes the addition and repair of the essential 3'-terminal CCA sequence in tRNAs without using a nucleic acid template. Adds these three nucleotides in the order of C, C, and A to the tRNA nucleotide-73, using CTP and ATP as substrates and producing inorganic pyrophosphate. tRNA 3'-terminal CCA addition is required both for tRNA processing and repair. Also involved in tRNA surveillance by mediating tandem CCA addition to generate a CCACCA at the 3' terminus of unstable tRNAs. While stable tRNAs receive only 3'-terminal CCA, unstable tRNAs are marked with CCACCA and rapidly degraded. The polypeptide is CCA-adding enzyme (Lactobacillus delbrueckii subsp. bulgaricus (strain ATCC 11842 / DSM 20081 / BCRC 10696 / JCM 1002 / NBRC 13953 / NCIMB 11778 / NCTC 12712 / WDCM 00102 / Lb 14)).